The chain runs to 190 residues: Elongation factor P-like protein (190 aa).

The protein belongs to the elongation factor P family.

This chain is Elongation factor P-like protein, found in Pectobacterium carotovorum subsp. carotovorum (strain PC1).